The following is a 447-amino-acid chain: MATNEEFIRTQIFGTVFEITNRYSDLNPVGMGAFGLVCSATDTLTNQQVAIKKIMKPFATAVLAKRTYRELKLLKHLRHENLICLQDIFLSPLEDIYFVTELQGTDLHRLLQTRPLEKQFVQYFHYQILRGLKYVHSAGVVHRDLKPSNILINENCDLKICDFGLARIQDPQMTGYVSTRYYRAPEIMLTWQKYDVEVDIWSAGCIFAEMIEGKPLFPGKDHVHQFSIITDLLGSPPSDVIDTICSENTLKFVTSLPHRDPIPFSERFKTVEPDAVDLLEKMLVFDPKKRITAADALAHPYLAPYHDPTDEPVAEAKFDWHFNDADLPVDTWRVMMYSEILDFHKIGGTDGQIDTSATFDDQVAAATVAAAQAQAHALAQAQMSQNMIDPNQLLNEDGTPVSGSIAENSSNSATTNLNGAAAGMNSASDTINEYANQAVHFANEFQQ.

Residues tyrosine 23–leucine 302 enclose the Protein kinase domain. Residues valine 29–valine 37 and lysine 52 each bind ATP. Aspartate 144 acts as the Proton acceptor in catalysis. The residue at position 174 (threonine 174) is a Phosphothreonine. The TXY signature appears at threonine 174–tyrosine 176. A Phosphotyrosine modification is found at tyrosine 176. Residues leucine 394 to threonine 414 are disordered. Residues valine 401–threonine 414 are compositionally biased toward polar residues.

It belongs to the protein kinase superfamily. Ser/Thr protein kinase family. MAP kinase subfamily. HOG1 sub-subfamily. The cofactor is Mg(2+). Dually phosphorylated on Thr-174 and Tyr-176, which activates the enzyme.

The protein resides in the cytoplasm. It is found in the nucleus. The catalysed reaction is L-seryl-[protein] + ATP = O-phospho-L-seryl-[protein] + ADP + H(+). It catalyses the reaction L-threonyl-[protein] + ATP = O-phospho-L-threonyl-[protein] + ADP + H(+). Its activity is regulated as follows. Activated by tyrosine and threonine phosphorylation. In terms of biological role, proline-directed serine/threonine-protein kinase involved in a signal transduction pathway that is activated by changes in the osmolarity of the extracellular environment. Controls osmotic regulation of transcription of target genes. The polypeptide is Mitogen-activated protein kinase HOG1 (HOG1) (Candida glabrata (strain ATCC 2001 / BCRC 20586 / JCM 3761 / NBRC 0622 / NRRL Y-65 / CBS 138) (Yeast)).